The following is a 1132-amino-acid chain: MATKSKSSVRGSIDDVLDDLLGYDDEGPAKSSQPAGVSSGRARGSSLQASKKSFLEDDFFSKLPAEDMEAAEGSSISDADPQAVLQTLKEMDDMEADLLGMSKPSSGLGKAATKGPGKFSTSEGAVKTSGKMPAPEKGESAPEMDKKPLSSPPTSRQYRKFNFEDVDDPLAGLLSEEEQDAPRKPSPKGSERRPERKTELGKEKDPLPPQTPLHTTAPARRREELTFEDDDDDMMDVLGFGDGQKGDQKHGKKAEEEEVRPARSKLDELLGRGSVAKILERPGAGEHREFKLDKKYQKQPEKEEGWDEEDFVFGAYQPTVATTPEGRPSRRQSVSRFSAENSSEPKPDPHSKPPPAASQSPARGSRAGGDWLGLKDEDFLDSEPPSPAKTSPVVSSQQLLAKEQATSKPNQLEEDNWLSAALSRKKAQAQVKAQERGAVPLETTGKGLDPSPAVSQPATSTGAAAQAAALQDKAASADSSGHPVPWLSTVTQTSAHPPEPAKRDPLRDVSPSDPAASSPAEQGMQGPAPLAQVTMPSTPLQAASQLQAESPPLGSVHERRPGAPTGQSYEDATGCRAALLSAQARVAELESQVRMLELERTQHKLLLESLQQRHQEDLDLLESAHRSRVKVVEETYGQREERLRREKEQLEAQLLSQSQDAERARADLVAQHKQRVATLEQQSAQELERLRELQRSSVQEMLKDHEEQLQRLKRLKDQEIDAVTSATSHTRSLNGVIEQMERFSSDLHSLSHKVEATHHTTSQELAMGARQRDEQLKVLQDRLSQQQRDMEEERSRLQEVIAKMEARLSEQTRLLEQERWRVTAVQSKVESLQRSLEEQRRLMTQQLSMERAELERAKSALLEEQKSVMQKCSEERRKLAVEWAEFHTQQQLSKERMERDIDRALQLDSQREGTIMSLAKEQAELKVRSRELKVKEEQLARDRLLLDEAWHELRLEKEKVKGATLRIRQQEEEIKNMSKLSAQKYEEGERALQDACRIESEHQARLQVMQQHLEQLKQQEQHLQQERLSMAHQRRQLEQLHKKLPNNPTLLLTTDQDLSASTKGLSSTLSFPPPIRTLPGHRSVGTTASMELYAKLLVLKHRAQQDRNFLEDEQLFLETLKKASYNTSPLSV.

Disordered stretches follow at residues 18 to 50 (DDLLGYDDEGPAKSSQPAGVSSGRARGSSLQAS), 65 to 84 (AEDMEAAEGSSISDADPQAV), and 89 to 570 (KEMD…QSYE). The segment covering 35–46 (AGVSSGRARGSS) has biased composition (low complexity). Basic and acidic residues-rich tracts occupy residues 134 to 148 (APEKGESAPEMDKKP) and 189 to 206 (GSERRPERKTELGKEKDP). The segment covering 226–235 (TFEDDDDDMM) has biased composition (acidic residues). Composition is skewed to basic and acidic residues over residues 244–270 (QKGDQKHGKKAEEEEVRPARSKLDELL) and 278–303 (ILERPGAGEHREFKLDKKYQKQPEKE). 2 stretches are compositionally biased toward polar residues: residues 331 to 341 (RQSVSRFSAEN) and 388 to 410 (AKTSPVVSSQQLLAKEQATSKPN). 2 stretches are compositionally biased toward low complexity: residues 458 to 480 (ATSTGAAAQAAALQDKAASADSS) and 511 to 520 (PSDPAASSPA). The segment covering 534–548 (TMPSTPLQAASQLQA) has biased composition (polar residues). Coiled coils occupy residues 576–727 (RAAL…TSAT), 769–882 (ARQR…LAVE), and 918–1044 (LAKE…HKKL).

It localises to the cytoplasm. The protein localises to the cytoskeleton. Its subcellular location is the microtubule organizing center. The protein resides in the centrosome. It is found in the centriole. It localises to the spindle pole. The protein localises to the cell junction. Its function is as follows. Keratin-binding protein required for epithelial cell polarization. Required for ciliogenesis. This chain is Fas-binding factor 1 homolog (FBF1), found in Gallus gallus (Chicken).